The chain runs to 85 residues: MARYFRRRKFCRFTAEGVKQIDYKDIIMLKNYITESGKIVPSRITGTCSKYQRQLAQAIKVARYLSLLPYTDEHVRRESCTTEVP.

The protein belongs to the bacterial ribosomal protein bS18 family. Part of the 30S ribosomal subunit. Forms a tight heterodimer with protein bS6.

Its function is as follows. Binds as a heterodimer with protein bS6 to the central domain of the 16S rRNA, where it helps stabilize the platform of the 30S subunit. This Hamiltonella defensa subsp. Acyrthosiphon pisum (strain 5AT) protein is Small ribosomal subunit protein bS18.